A 280-amino-acid polypeptide reads, in one-letter code: Beta-lactamase OXA-58 (280 aa).

The first 18 residues, 1-18, serve as a signal peptide directing secretion; that stretch reads MKLLKILSLVCLSISIGA. Cys19 is lipidated: N-palmitoyl cysteine. Residue Cys19 is the site of S-diacylglycerol cysteine attachment. The active-site Acyl-ester intermediate is Ser83. 6 residues coordinate a beta-lactam: Ser83, Lys86, Ser130, Ser221, Trp223, and Arg263. Lys86 bears the N6-carboxylysine mark.

The protein belongs to the class-D beta-lactamase family. In terms of assembly, monomer. Dimer. In terms of processing, carboxylated on the epsilon-amino group of a lysine, with the resulting carbamate functional group serving as a general base. Probably N-carboxylated at Lys-86 at neutral pH in vivo and undergoes complete N-decarboxylation, at pH 4.1, in vitro. N-carboxylation at Lys-86 probably increases catalytic activity under physiological conditions.

It localises to the cell membrane. It carries out the reaction a beta-lactam + H2O = a substituted beta-amino acid. Its activity is regulated as follows. Activated approximately 3-fold by the presence of 0.1M NaHCO3. Functionally, class D beta-lactamase which confers resistance to the beta-lactam antibiotics, including penicillins and oxacillin, and moderate resistance to carbapenems such as imipenem; in the DH10B strain of E.coli. Acts via hydrolysis of the beta-lactam ring. Has benzylpenicillin-, oxacillin-, cephalothin- and imipenem-hydrolyzing activities. The chain is Beta-lactamase OXA-58 from Acinetobacter baumannii.